The following is a 423-amino-acid chain: Serine hydroxymethyltransferase (423 aa).

(6S)-5,6,7,8-tetrahydrofolate-binding positions include Leu-126 and 130-132 (GHL). Lys-235 bears the N6-(pyridoxal phosphate)lysine mark.

It belongs to the SHMT family. In terms of assembly, homodimer. Requires pyridoxal 5'-phosphate as cofactor.

It is found in the cytoplasm. The catalysed reaction is (6R)-5,10-methylene-5,6,7,8-tetrahydrofolate + glycine + H2O = (6S)-5,6,7,8-tetrahydrofolate + L-serine. The protein operates within one-carbon metabolism; tetrahydrofolate interconversion. It participates in amino-acid biosynthesis; glycine biosynthesis; glycine from L-serine: step 1/1. Functionally, catalyzes the reversible interconversion of serine and glycine with tetrahydrofolate (THF) serving as the one-carbon carrier. This reaction serves as the major source of one-carbon groups required for the biosynthesis of purines, thymidylate, methionine, and other important biomolecules. Also exhibits THF-independent aldolase activity toward beta-hydroxyamino acids, producing glycine and aldehydes, via a retro-aldol mechanism. The polypeptide is Serine hydroxymethyltransferase (Sorangium cellulosum (strain So ce56) (Polyangium cellulosum (strain So ce56))).